Here is a 247-residue protein sequence, read N- to C-terminus: Flavin-dependent thymidylate synthase (247 aa).

One can recognise a ThyX domain in the interval 1 to 237; that stretch reads MDVKLLEATD…PKTFEYYEQE (237 aa). DUMP contacts are provided by residues 85–88, 98–100, and R176; these read QITR and SMR. 88–90 is an FAD binding site; that stretch reads RHR. The ThyX motif signature appears at 88–98; the sequence is RHRHVSFDVQS. FAD contacts are provided by residues 192–194 and H198; that span reads NAR. R203 is a dUMP binding site. The Involved in ionization of N3 of dUMP, leading to its activation role is filled by R203.

The protein belongs to the thymidylate synthase ThyX family. Homotetramer. Requires FAD as cofactor.

The enzyme catalyses dUMP + (6R)-5,10-methylene-5,6,7,8-tetrahydrofolate + NADPH + H(+) = dTMP + (6S)-5,6,7,8-tetrahydrofolate + NADP(+). The protein operates within pyrimidine metabolism; dTTP biosynthesis. Catalyzes the reductive methylation of 2'-deoxyuridine-5'-monophosphate (dUMP) to 2'-deoxythymidine-5'-monophosphate (dTMP) while utilizing 5,10-methylenetetrahydrofolate (mTHF) as the methyl donor, and NADPH and FADH(2) as the reductant. The protein is Flavin-dependent thymidylate synthase of Haloarcula marismortui (strain ATCC 43049 / DSM 3752 / JCM 8966 / VKM B-1809) (Halobacterium marismortui).